Reading from the N-terminus, the 288-residue chain is MILLALPNKGRISKPVNEILEKSGLKISVHGRSLFAKTVDPEIKVMFARAKDIPEFVRDGVADVGVTGYDLMLERDTEEELEMLLDFKFGNARLVLAAPENSDVNSIEDVKNGMKIATEFPGLTKRYLEKKGLNLEIIELSGATEIAPFIGVSDLICDLTSTGTTLQLNRLKEIENVVSSSTRLVANKKSMEDPEKSAKINQVLSGIKSVMYAQSKRLIMMNAPKDKVSEITSVIPGMGGPTVSEILSNCNMLAINAVIDENKVFETVSNLEKLGARDILVVPIERIL.

It belongs to the ATP phosphoribosyltransferase family. Long subfamily. The cofactor is Mg(2+).

It localises to the cytoplasm. The enzyme catalyses 1-(5-phospho-beta-D-ribosyl)-ATP + diphosphate = 5-phospho-alpha-D-ribose 1-diphosphate + ATP. It participates in amino-acid biosynthesis; L-histidine biosynthesis; L-histidine from 5-phospho-alpha-D-ribose 1-diphosphate: step 1/9. Its activity is regulated as follows. Feedback inhibited by histidine. In terms of biological role, catalyzes the condensation of ATP and 5-phosphoribose 1-diphosphate to form N'-(5'-phosphoribosyl)-ATP (PR-ATP). Has a crucial role in the pathway because the rate of histidine biosynthesis seems to be controlled primarily by regulation of HisG enzymatic activity. The chain is ATP phosphoribosyltransferase from Methanococcus maripaludis (strain DSM 14266 / JCM 13030 / NBRC 101832 / S2 / LL).